A 186-amino-acid polypeptide reads, in one-letter code: MIEASKLKAGMTFETADGKLIRVLEASHHKPGKGNTIMRMKLRDVRTGSTFDTSYRPEEKFEQAIIETVPAQYLYKMDDTAYFMNTETYDQYEIPVVNVENELLYILENSDVKIQFYGTEVIGVTVPTTVELTVAETQPSIKGATVTGSGKPATMETGLVVNVPDFIEAGQKLVINTAEGTYVSRA.

This sequence belongs to the elongation factor P family.

The protein localises to the cytoplasm. It functions in the pathway protein biosynthesis; polypeptide chain elongation. Functionally, involved in peptide bond synthesis. Stimulates efficient translation and peptide-bond synthesis on native or reconstituted 70S ribosomes in vitro. Probably functions indirectly by altering the affinity of the ribosome for aminoacyl-tRNA, thus increasing their reactivity as acceptors for peptidyl transferase. The sequence is that of Elongation factor P from Streptococcus pneumoniae (strain Hungary19A-6).